We begin with the raw amino-acid sequence, 205 residues long: Casparian strip membrane protein 4 (205 aa).

The Cytoplasmic portion of the chain corresponds to 1-58; sequence MDIEKTGSRREEEEPIVQKPKLEKGKGKAHVFAPPMNYSRIMEKHKQEKVSMAGWKRG. A helical membrane pass occupies residues 59–79; it reads VAIFDFVLRLIAAITAMAAAA. Topologically, residues 80–109 are extracellular; that stretch reads KMATTEETLPFFTQFLQFSADYTDLPTLSS. A helical membrane pass occupies residues 110–130; that stretch reads FVIVNSIVGGYLTLSLPFSIV. The Cytoplasmic segment spans residues 131 to 148; sequence CILRPLAVPPRLFLILCD. The chain crosses the membrane as a helical span at residues 149–169; that stretch reads TAMMGLTMVAASASAAIVYLA. The Extracellular portion of the chain corresponds to 170–205; it reads HNGNSSSNWLPVCQQFGDFCKERVAPWWLPLLQRLF. Residue Asn173 is glycosylated (N-linked (GlcNAc...) asparagine).

Belongs to the Casparian strip membrane proteins (CASP) family. Homodimer and heterodimers.

The protein resides in the cell membrane. In terms of biological role, regulates membrane-cell wall junctions and localized cell wall deposition. Required for establishment of the Casparian strip membrane domain (CSD) and the subsequent formation of Casparian strips, a cell wall modification of the root endodermis that determines an apoplastic barrier between the intraorganismal apoplasm and the extraorganismal apoplasm and prevents lateral diffusion. This Raphanus sativus (Radish) protein is Casparian strip membrane protein 4.